The primary structure comprises 206 residues: LexA repressor (206 aa).

Positions 28-48 (RAEIATRLGFKSANAAEEHLK) form a DNA-binding region, H-T-H motif. Catalysis depends on for autocatalytic cleavage activity residues serine 123 and lysine 160.

The protein belongs to the peptidase S24 family. In terms of assembly, homodimer.

It catalyses the reaction Hydrolysis of Ala-|-Gly bond in repressor LexA.. Functionally, represses a number of genes involved in the response to DNA damage (SOS response), including recA and lexA. In the presence of single-stranded DNA, RecA interacts with LexA causing an autocatalytic cleavage which disrupts the DNA-binding part of LexA, leading to derepression of the SOS regulon and eventually DNA repair. The sequence is that of LexA repressor from Shewanella baltica (strain OS223).